Here is a 217-residue protein sequence, read N- to C-terminus: Small ribosomal subunit protein uS3 (217 aa).

Residues 40–110 (IRDVINKGFN…EVYINIHEVR (71 aa)) enclose the KH type-2 domain.

This sequence belongs to the universal ribosomal protein uS3 family. In terms of assembly, part of the 30S ribosomal subunit. Forms a tight complex with proteins S10 and S14.

Functionally, binds the lower part of the 30S subunit head. Binds mRNA in the 70S ribosome, positioning it for translation. This Rickettsia massiliae (strain Mtu5) protein is Small ribosomal subunit protein uS3.